A 215-amino-acid polypeptide reads, in one-letter code: MRDELVWIDCEMTGLDLRSDLLIEIAVLVTDADLNILGDGLDVVIHAPDEALDAMIPVVTEMHTRSGLIEEVRASTVDLATAEEMVLDYIRGHVKQAKTAPLAGNSIATDRGFIARDMAKLDDYLHYRMIDVSSIKELCRRWYPRIYFGQPEKGLAHRALADIHESIRELKYYRQTAFVAPPGPSTSDIAAIAAELGPPGKDAADTDSAAGHTTG.

Positions 5–170 (LVWIDCEMTG…ADIHESIREL (166 aa)) constitute an Exonuclease domain. Tyr-127 is an active-site residue. The interval 196–215 (LGPPGKDAADTDSAAGHTTG) is disordered.

It belongs to the oligoribonuclease family.

Its subcellular location is the cytoplasm. In terms of biological role, 3'-to-5' exoribonuclease specific for small oligoribonucleotides. The chain is Oligoribonuclease from Mycobacterium sp. (strain JLS).